The following is a 518-amino-acid chain: Efflux pump terJ (518 aa).

The helical transmembrane segment at 43–63 threads the bilayer; it reads IAFIVVVCMAQLVSQAGLGQV. A glycan (N-linked (GlcNAc...) asparagine) is linked at Asn79. 12 consecutive transmembrane segments (helical) span residues 82 to 102, 112 to 132, 135 to 155, 177 to 197, 204 to 224, 244 to 264, 272 to 292, 311 to 331, 339 to 359, 364 to 384, 400 to 420, and 439 to 459; these read QLSW…LGAG, LLFT…AFAE, GPVF…FLLP, AFGS…ALAA, WGFW…IFWV, IAGC…LNMA, PYIY…GYIE, FVLA…FYGW, GISP…GFVA, GLIL…AAFC, WAQL…SFPA, and SLVA…GAIV. An N-linked (GlcNAc...) asparagine glycan is attached at Asn466. A helical membrane pass occupies residues 477 to 497; the sequence is AWYLGVGLAASGIILTMFFAL.

It belongs to the major facilitator superfamily.

The protein localises to the cell membrane. Its function is as follows. Efflux pump that might be required for efficient secretion of terrein or other secondary metabolies produced by the terrein genne cluster. The chain is Efflux pump terJ from Aspergillus terreus (strain NIH 2624 / FGSC A1156).